The sequence spans 265 residues: Homeobox protein CDX-1 (265 aa).

The disordered stretch occupies residues 9 to 152 (KDSPVYPGPA…GGGGVSGKTR (144 aa)). Residues 30-43 (YGPPAPPPAPPQYP) show a composition bias toward pro residues. Residues 73–92 (AAAYGPGPAAPAASPASLAF) are compositionally biased toward low complexity. A compositionally biased stretch (pro residues) spans 93–108 (GPPPDFSPVPAPPGPG). Positions 110-126 (GLLAQPLGGPGTPSSPG) are enriched in low complexity. The segment at residues 154-213 (KDKYRVVYTDHQRLELEKEFHYSRYITIRRKSELAANLGLTERQVKIWFQNRRAKERKVN) is a DNA-binding region (homeobox). Residues 157–178 (YRVVYTDHQRLELEKEFHYSRY) form an interaction with DNA region. The tract at residues 196–207 (RQVKIWFQNRRA) is interaction with 5-mCpG DNA. Residues 206-217 (RAKERKVNKKKQ) are compositionally biased toward basic residues. The interval 206-265 (RAKERKVNKKKQQQQQPPQPPTAHDITATPARPSLGGLCPSNTSLLATSSPMPVKEEFLP) is disordered. Over residues 245-256 (PSNTSLLATSSP) the composition is skewed to polar residues.

It belongs to the Caudal homeobox family.

It localises to the nucleus. In terms of biological role, plays a role in transcriptional regulation. Involved in activated KRAS-mediated transcriptional activation of PRKD1 in colorectal cancer (CRC) cells. Binds to the PRKD1 promoter in colorectal cancer (CRC) cells. Could play a role in the terminal differentiation of the intestine. Binds preferentially to methylated DNA. This is Homeobox protein CDX-1 (CDX1) from Pongo pygmaeus (Bornean orangutan).